Reading from the N-terminus, the 568-residue chain is Sulfate adenylyltransferase (568 aa).

The segment at 1–162 is N-terminal; sequence MANSPHGGVL…IEAVNKLNHY (162 aa). Residues 163 to 388 form a catalytic region; that stretch reads DYVALRYSPA…LRESSPPRAT (226 aa). Glutamine 190 contributes to the sulfate binding site. ATP-binding positions include 190 to 193 and 284 to 287; these read QTRN and GRDH. Catalysis depends on residues threonine 191, arginine 192, and asparagine 193. Position 192 (arginine 192) interacts with sulfate. Residue alanine 288 participates in sulfate binding. Valine 326 serves as a coordination point for ATP. The tract at residues 389 to 568 is allosteric regulation domain; adenylyl-sulfate kinase-like; the sequence is QGFTIFLTGY…LESEGYFDRL (180 aa). 3'-phosphoadenylyl sulfate-binding positions include 428 to 431, arginine 445, 471 to 472, and arginine 510; these read DTVR and IA.

The protein in the N-terminal section; belongs to the sulfate adenylyltransferase family. It in the C-terminal section; belongs to the APS kinase family. As to quaternary structure, homohexamer. Dimer of trimers.

The protein localises to the cytoplasm. It catalyses the reaction sulfate + ATP + H(+) = adenosine 5'-phosphosulfate + diphosphate. The protein operates within sulfur metabolism; hydrogen sulfide biosynthesis; sulfite from sulfate: step 1/3. Its activity is regulated as follows. Allosterically inhibited by 3'-phosphoadenosine 5'-phosphosulfate (PAPS). Its function is as follows. Catalyzes the first intracellular reaction of sulfate assimilation, forming adenosine-5'-phosphosulfate (APS) from inorganic sulfate and ATP. Plays an important role in sulfate activation as a component of the biosynthesis pathway of sulfur-containing amino acids. The sequence is that of Sulfate adenylyltransferase from Aspergillus terreus.